A 319-amino-acid polypeptide reads, in one-letter code: Aspartate carbamoyltransferase catalytic subunit (319 aa).

2 residues coordinate carbamoyl phosphate: R65 and T66. Residue K93 coordinates L-aspartate. Residues R115, H143, and Q146 each coordinate carbamoyl phosphate. L-aspartate-binding residues include R176 and R230. Carbamoyl phosphate-binding residues include G271 and P272.

Belongs to the aspartate/ornithine carbamoyltransferase superfamily. ATCase family. Heterododecamer (2C3:3R2) of six catalytic PyrB chains organized as two trimers (C3), and six regulatory PyrI chains organized as three dimers (R2).

The catalysed reaction is carbamoyl phosphate + L-aspartate = N-carbamoyl-L-aspartate + phosphate + H(+). The protein operates within pyrimidine metabolism; UMP biosynthesis via de novo pathway; (S)-dihydroorotate from bicarbonate: step 2/3. In terms of biological role, catalyzes the condensation of carbamoyl phosphate and aspartate to form carbamoyl aspartate and inorganic phosphate, the committed step in the de novo pyrimidine nucleotide biosynthesis pathway. This Chelativorans sp. (strain BNC1) protein is Aspartate carbamoyltransferase catalytic subunit.